An 896-amino-acid polypeptide reads, in one-letter code: MLKTIATKIFGSRNDRVLRKLNKVVKKINGLEPAFSALTDDELKAKTAEFRARLEKGESLESLMPEAFATVREASRRVLGMRHFDVQLIGGMVLTNRNIAEMRTGEGKTLTATLPCYLNALTGKGVHVVTVNDYLANRDAETNRPLFEFLGMTVGVNIPGLPPEVKRAAYQADITYATNSELGFDYLRDNLAHSKEERFQRQLHYALVDEVDSILIDEARTPLIISGPAEDSSELYIAIDKLIPLLVKQDKEDTEEYQGDGDFTLDLKTKQAHLTERGQEKCENWLIENGFMTENESLYSPAKIGLVHHIYAALRAHTLFERDVDYIVKDGEIVIVDEHTGRTMAGRRWSDGLHQAIEAKEHVKIQGENQTVASITYQNYFRLYEKLAGMTGTADTEAFEFQQIYGLETIVIPTNRPMIRDDRTDVMFESEAYKFQAIIEDIKECVARSQPVLVGTASIEKSELLSNELDKAGIPHNVLNAKFHAQEAEIIANAGYPGAVTIATNMAGRGTDIVLGGNWRAEAAKLENPTEEQLEALKAAWQERHDVVMKAGGLHIIGTERHESRRIDNQLRGRSGRQGDPGSSRFYLSLDDSLMRIYLNEGKLNMMRKAFSTPGEAMESKLLAKVIASAQAKVEAHNFDGRKNLLQFDDVANDQRHAIYAQRNDLLDHEDISETIKAIREDVYNEVIDQYIPPQSLEEQWNIAELEKRLKQDFALDLPIQQWLEEDNQLHEDNLRERIIASAVEEYQHKEEIVGAETMRNFEKGVMLQTLDELWKEHLAAMDQLRKGIHLRGYAQKDPKQEYKKESFQMFTEMLDALKLTVIRTLSRVQVRTQEEAQAEAAQQAAAESKDYADDSASGERSVAQTTQRIGRNDPCPCGSGKKYKHCHGNRAAHEA.

Residues Gln-87, 105-109, and Asp-512 each bind ATP; that span reads GEGKT. 2 disordered regions span residues 565–584 and 840–896; these read RRID…PGSS and EAAQ…AHEA. 4 residues coordinate Zn(2+): Cys-876, Cys-878, Cys-887, and His-888. Over residues 882–896 the composition is skewed to basic residues; it reads KKYKHCHGNRAAHEA.

This sequence belongs to the SecA family. Monomer and homodimer. Part of the essential Sec protein translocation apparatus which comprises SecA, SecYEG and auxiliary proteins SecDF-YajC and YidC. Zn(2+) is required as a cofactor.

The protein localises to the cell inner membrane. The protein resides in the cytoplasm. It catalyses the reaction ATP + H2O + cellular proteinSide 1 = ADP + phosphate + cellular proteinSide 2.. Part of the Sec protein translocase complex. Interacts with the SecYEG preprotein conducting channel. Has a central role in coupling the hydrolysis of ATP to the transfer of proteins into and across the cell membrane, serving both as a receptor for the preprotein-SecB complex and as an ATP-driven molecular motor driving the stepwise translocation of polypeptide chains across the membrane. In Mannheimia succiniciproducens (strain KCTC 0769BP / MBEL55E), this protein is Protein translocase subunit SecA.